The primary structure comprises 413 residues: tRNA (guanine-N(7)-)-methyltransferase non-catalytic subunit wdr4 (413 aa).

WD repeat units follow at residues 101 to 140, 144 to 183, 187 to 227, and 286 to 328; these read WVVR…KAGE, GHLS…NIQA, GHTE…RLHS, and TLTL…WRLC. The disordered stretch occupies residues 386–413; that stretch reads KKRAAAANGSKPNKKSKTESGAVPQSTS.

Belongs to the WD repeat TRM82 family. As to quaternary structure, non-catalytic component of the METTL1-WDR4 complex, composed of mettl1 and wdr4.

The protein localises to the nucleus. It functions in the pathway tRNA modification; N(7)-methylguanine-tRNA biosynthesis. In terms of biological role, non-catalytic component of the METTL1-WDR4 methyltransferase complex required for the formation of N(7)-methylguanine in a subset of RNA species, such as tRNAs, mRNAs and microRNAs (miRNAs). In the METTL1-WDR4 methyltransferase complex, wdr4 acts as a scaffold for tRNA-binding. Required for the formation of N(7)-methylguanine at position 46 (m7G46) in a large subset of tRNAs that contain the 5'-RAGGU-3' motif within the variable loop. M7G46 interacts with C13-G22 in the D-loop to stabilize tRNA tertiary structure and protect tRNAs from decay. Also required for the formation of N(7)-methylguanine at internal sites in a subset of mRNAs. Also required for methylation of a specific subset of miRNAs. This chain is tRNA (guanine-N(7)-)-methyltransferase non-catalytic subunit wdr4 (wdr4), found in Danio rerio (Zebrafish).